The primary structure comprises 304 residues: Protoheme IX farnesyltransferase 1 (304 aa).

Helical transmembrane passes span 24–44 (VVVL…KAPL), 47–67 (FVPW…AGAA), 99–119 (MALG…LAFT), 122–142 (LTAW…TGFL), 150–170 (IVIG…AITG), 176–196 (PLLL…ALCI), 228–248 (LVLF…LVYL), and 280–300 (YSIV…YLPL).

The protein belongs to the UbiA prenyltransferase family. Protoheme IX farnesyltransferase subfamily.

Its subcellular location is the cell inner membrane. The enzyme catalyses heme b + (2E,6E)-farnesyl diphosphate + H2O = Fe(II)-heme o + diphosphate. The protein operates within porphyrin-containing compound metabolism; heme O biosynthesis; heme O from protoheme: step 1/1. Its function is as follows. Converts heme B (protoheme IX) to heme O by substitution of the vinyl group on carbon 2 of heme B porphyrin ring with a hydroxyethyl farnesyl side group. The polypeptide is Protoheme IX farnesyltransferase 1 (Pseudomonas aeruginosa (strain UCBPP-PA14)).